A 392-amino-acid polypeptide reads, in one-letter code: Casein kinase II subunit alpha (392 aa).

A Protein kinase domain is found at Tyr39 to Phe324. ATP-binding positions include Leu45–Val53 and Lys68. Asp156 acts as the Proton acceptor in catalysis. The interval Met334 to Gly355 is disordered. Over residues Ser337–Ser354 the composition is skewed to low complexity.

This sequence belongs to the protein kinase superfamily. Ser/Thr protein kinase family. CK2 subfamily. As to quaternary structure, tetramer composed of an alpha chain, an alpha' and two beta chains.

It localises to the nucleus. The catalysed reaction is L-seryl-[protein] + ATP = O-phospho-L-seryl-[protein] + ADP + H(+). The enzyme catalyses L-threonyl-[protein] + ATP = O-phospho-L-threonyl-[protein] + ADP + H(+). Catalytic subunit of a constitutively active serine/threonine-protein kinase complex that phosphorylates a large number of substrates containing acidic residues C-terminal to the phosphorylated serine or threonine. Regulates numerous cellular processes, such as cell cycle progression, apoptosis and transcription, as well as viral infection. May act as a regulatory node which integrates and coordinates numerous signals leading to an appropriate cellular response. During mitosis, functions as a component of the p53/TP53-dependent spindle assembly checkpoint (SAC) that maintains cyclin-B-CDK1 activity and G2 arrest in response to spindle damage. Can also negatively regulate apoptosis. Phosphorylates the caspases CASP9 and CASP2 and the apoptotic regulator NOL3. Phosphorylation protects CASP9 from cleavage and activation by CASP8, and inhibits the dimerization of CASP2 and activation of CASP8. Plays an important role in the circadian clock function by phosphorylating BMAL1. The polypeptide is Casein kinase II subunit alpha (csnk2a1) (Xenopus laevis (African clawed frog)).